Reading from the N-terminus, the 56-residue chain is MAHESVWFSHPRNFGKGSRQCRVCSSHSGLIRKYDLNICRQCFRERASDIGFNKFR.

Zn(2+) contacts are provided by Cys-21, Cys-24, Cys-39, and Cys-42.

This sequence belongs to the universal ribosomal protein uS14 family. Zn(2+) is required as a cofactor.

This is Small ribosomal subunit protein uS14 (RPS29) from Debaryomyces hansenii (strain ATCC 36239 / CBS 767 / BCRC 21394 / JCM 1990 / NBRC 0083 / IGC 2968) (Yeast).